The primary structure comprises 275 residues: AA9 family lytic polysaccharide monooxygenase AA9-X282 (275 aa).

A signal peptide spans 1–17; the sequence is MFTKLIIAASLAASVAA. Residue histidine 18 participates in Cu(2+) binding. Position 20 is a phosphothreonine (threonine 20). Residues serine 43 and serine 49 each carry the phosphoserine modification. Threonine 50 is subject to Phosphothreonine. Serine 58 carries the phosphoserine modification. A disulfide bond links cysteine 66 and cysteine 185. Histidine 96 is a binding site for Cu(2+). Serine 130 carries the post-translational modification Phosphoserine. Residues histidine 171 and glutamine 180 each coordinate O2. Tyrosine 182 provides a ligand contact to Cu(2+). Residues 236-265 form an X282 extension region; that stretch reads TSPAVANTPYPTTATWNTALQPSTVPTAVP. Positions 268–275 match the 9res motif motif; sequence GTPGIGKA.

This sequence belongs to the polysaccharide monooxygenase AA9 family. The cofactor is Cu(2+).

The protein localises to the secreted. The enzyme catalyses [(1-&gt;4)-beta-D-glucosyl]n+m + reduced acceptor + O2 = 4-dehydro-beta-D-glucosyl-[(1-&gt;4)-beta-D-glucosyl]n-1 + [(1-&gt;4)-beta-D-glucosyl]m + acceptor + H2O.. In terms of biological role, lytic polysaccharide monooxygenase (LPMO) that depolymerizes crystalline and amorphous polysaccharides via the oxidation of scissile alpha- or beta-(1-4)-glycosidic bonds, yielding C1 oxidation products. Catalysis by LPMOs requires the reduction of the active-site copper from Cu(II) to Cu(I) by a reducing agent and H(2)O(2) or O(2) as a cosubstrate. Shows only weak binding properties to cellulose, and low cellulolytic oxidative activity which questions the involvement of X282 extension-containing AA9 proteins in the degradation of plant cell wall and opens new avenues as to the divergence of function of some AA9 members. This is AA9 family lytic polysaccharide monooxygenase AA9-X282 from Trametes coccinea (strain BRFM310) (Pycnoporus coccineus).